Here is a 910-residue protein sequence, read N- to C-terminus: DNA mismatch repair protein MutS (910 aa).

Positions 1–11 (MEAKVEEKEPE) are enriched in basic and acidic residues. A disordered region spans residues 1–21 (MEAKVEEKEPEPVENAGPDAP). 658–665 (GPNMGGKS) is a binding site for ATP.

The protein belongs to the DNA mismatch repair MutS family.

Its function is as follows. This protein is involved in the repair of mismatches in DNA. It is possible that it carries out the mismatch recognition step. This protein has a weak ATPase activity. The protein is DNA mismatch repair protein MutS of Brucella suis (strain ATCC 23445 / NCTC 10510).